We begin with the raw amino-acid sequence, 591 residues long: V-type ATP synthase alpha chain (591 aa).

ATP is bound at residue 242 to 249 (GPFGAGKT).

Belongs to the ATPase alpha/beta chains family.

It carries out the reaction ATP + H2O + 4 H(+)(in) = ADP + phosphate + 5 H(+)(out). Its function is as follows. Produces ATP from ADP in the presence of a proton gradient across the membrane. The V-type alpha chain is a catalytic subunit. The chain is V-type ATP synthase alpha chain from Chlamydia abortus (strain DSM 27085 / S26/3) (Chlamydophila abortus).